We begin with the raw amino-acid sequence, 419 residues long: Dimethylallyltryptophan synthase 1 (419 aa).

L-tryptophan-binding residues include Phe-81, Met-82, and Glu-90. Residue Phe-81 coordinates L-tyrosine. 6 residues coordinate (2E)-geranyl diphosphate: Arg-105, Lys-187, Tyr-189, Arg-251, Lys-253, and Tyr-255. Dimethylallyl diphosphate is bound by residues Arg-105, Lys-187, Tyr-189, Arg-251, Lys-253, and Tyr-255. Arg-257 lines the L-tryptophan pocket. Arg-257 is an L-tyrosine binding site. The (2E)-geranyl diphosphate site is built by Lys-332 and Tyr-334. Dimethylallyl diphosphate-binding residues include Lys-332 and Tyr-334. Tyr-389 is an L-tryptophan binding site. Tyr-389 serves as a coordination point for L-tyrosine. Residue Tyr-404 participates in (2E)-geranyl diphosphate binding.

The protein belongs to the tryptophan dimethylallyltransferase family.

The enzyme catalyses L-tyrosine + dimethylallyl diphosphate = 4-O-dimethylallyl-L-tyrosine + diphosphate. Functionally, dimethylallyltryptophan synthase; part of the DMATS1 gene cluster that mediates the biosynthesis of a reversely N-prenylated monomeric L-tryptophan (r-N-DMAT). DMATS1 catalyzes the reverse N-prenylation of L-Trp with DMAPP to yield N-dimethylallyl-L-tryptophan. DMATS1 exhibits unusually broad substrate specificity and can utilize geranyl diphosphate (GPP) or L-Tyr as an alternative prenyl donor or acceptor, respectively. Is able to catalyze both forward and reverse prenylation, i.e., at C1 or C3 of DMAPP; and it can catalyze C-N and C-O bond-forming reactions. The main product of the cluster is the reverse-N-dimethylallyl-L-tryptophan (r-N-DMAT) produced by the dimethylallyltryptophan synthase DMATS1 and it remains unclear whether this metabolite undergoes further modifications when silent gene clusters are activated. The acetylated form of r-N-DMAT, ac-r-N-DMAT, is also produced. The roles of the cytochrome P450 monooxygenase FFUJ_09176 and the methyltransferase FFUJ_09178 have still to be elucidated. The protein is Dimethylallyltryptophan synthase 1 of Gibberella fujikuroi (strain CBS 195.34 / IMI 58289 / NRRL A-6831) (Bakanae and foot rot disease fungus).